The chain runs to 274 residues: Probable cyclic nucleotide phosphodiesterase RPA0124 (274 aa).

Positions 8, 10, 49, 79, 155, 194, and 196 each coordinate Fe cation. AMP-binding positions include His10, Asp49, and 79–80; that span reads NH. AMP is bound at residue His196.

It belongs to the cyclic nucleotide phosphodiesterase class-III family. It depends on Fe(2+) as a cofactor.

The sequence is that of Probable cyclic nucleotide phosphodiesterase RPA0124 from Rhodopseudomonas palustris (strain ATCC BAA-98 / CGA009).